Reading from the N-terminus, the 79-residue chain is D-alanyl carrier protein (79 aa).

The Carrier domain occupies 1-76 (MKEQIFDIIE…KIAARVQEKK (76 aa)). Ser-34 carries the post-translational modification O-(pantetheine 4'-phosphoryl)serine.

The protein belongs to the DltC family. In terms of processing, 4'-phosphopantetheine is transferred from CoA to a specific serine of apo-DCP.

It is found in the cytoplasm. The protein operates within cell wall biogenesis; lipoteichoic acid biosynthesis. Its function is as follows. Carrier protein involved in the D-alanylation of lipoteichoic acid (LTA). The loading of thioester-linked D-alanine onto DltC is catalyzed by D-alanine--D-alanyl carrier protein ligase DltA. The DltC-carried D-alanyl group is further transferred to cell membrane phosphatidylglycerol (PG) by forming an ester bond, probably catalyzed by DltD. D-alanylation of LTA plays an important role in modulating the properties of the cell wall in Gram-positive bacteria, influencing the net charge of the cell wall. The polypeptide is D-alanyl carrier protein (Lactococcus lactis subsp. lactis (strain IL1403) (Streptococcus lactis)).